A 269-amino-acid chain; its full sequence is Phosphatidylglycerol--prolipoprotein diacylglyceryl transferase (269 aa).

Helical transmembrane passes span 10–30 (IAVSIGPISVHWYGIMYLIGF), 56–76 (AIFYGALGVILGGRVGYILFY), 91–111 (IWEGGMSFHGGLLGVIIAMFF), 126–146 (FLAPFVPIGLGAGRLGNFIGG), 172–192 (PSQLYQFALEGVALFCILWFF), 200–220 (YCVSGMFLLFYGIFRILVEFV), and 237–257 (EGQLLSLPMVIIGAGLIMAGL). Arg139 lines the a 1,2-diacyl-sn-glycero-3-phospho-(1'-sn-glycerol) pocket.

Belongs to the Lgt family.

The protein resides in the cell inner membrane. The catalysed reaction is L-cysteinyl-[prolipoprotein] + a 1,2-diacyl-sn-glycero-3-phospho-(1'-sn-glycerol) = an S-1,2-diacyl-sn-glyceryl-L-cysteinyl-[prolipoprotein] + sn-glycerol 1-phosphate + H(+). It functions in the pathway protein modification; lipoprotein biosynthesis (diacylglyceryl transfer). Its function is as follows. Catalyzes the transfer of the diacylglyceryl group from phosphatidylglycerol to the sulfhydryl group of the N-terminal cysteine of a prolipoprotein, the first step in the formation of mature lipoproteins. The chain is Phosphatidylglycerol--prolipoprotein diacylglyceryl transferase from Marinomonas sp. (strain MWYL1).